Consider the following 418-residue polypeptide: Tyrosine--tRNA ligase (418 aa).

Tyr34 contributes to the L-tyrosine binding site. The short motif at 39–48 (PTADSLHLGH) is the 'HIGH' region element. Tyr169 and Gln173 together coordinate L-tyrosine. Positions 229–233 (KFGKS) match the 'KMSKS' region motif. ATP is bound at residue Lys232. One can recognise an S4 RNA-binding domain in the interval 352 to 418 (NNIVELLVSS…GKKKYFVLTY (67 aa)).

This sequence belongs to the class-I aminoacyl-tRNA synthetase family. TyrS type 1 subfamily. As to quaternary structure, homodimer.

Its subcellular location is the cytoplasm. It catalyses the reaction tRNA(Tyr) + L-tyrosine + ATP = L-tyrosyl-tRNA(Tyr) + AMP + diphosphate + H(+). Functionally, catalyzes the attachment of tyrosine to tRNA(Tyr) in a two-step reaction: tyrosine is first activated by ATP to form Tyr-AMP and then transferred to the acceptor end of tRNA(Tyr). The protein is Tyrosine--tRNA ligase of Streptococcus pneumoniae (strain Taiwan19F-14).